The sequence spans 268 residues: Centromere protein Q (268 aa).

Residues 1–80 (MSGKANASKK…KTWQPLSKST (80 aa)) are disordered. Phosphoserine occurs at positions 31 and 50. The segment covering 58–72 (TNLKHGKTAASKRKT) has biased composition (basic residues). A coiled-coil region spans residues 170–206 (ELMTGNIQSLKNKIQILASEVEEEEERVKQMHQINSS). Phosphoserine is present on S249.

This sequence belongs to the CENP-Q/OKP1 family. In terms of assembly, component of the CENPA-CAD complex, composed of CENPI, CENPK, CENPL, CENPO, CENPP, CENPQ, CENPR and CENPS. The CENPA-CAD complex interacts with the CENPA-NAC complex, at least composed of CENPA, CENPC, CENPH, CENPM, CENPN, CENPT and CENPU. In terms of processing, phosphorylation at Ser-50 is essential for CENPE recruitment to kinetochores and orderly chromosome congression.

Its subcellular location is the nucleus. The protein localises to the chromosome. It is found in the centromere. Its function is as follows. Component of the CENPA-CAD (nucleosome distal) complex, a complex recruited to centromeres which is involved in assembly of kinetochore proteins, mitotic progression and chromosome segregation. May be involved in incorporation of newly synthesized CENPA into centromeres via its interaction with the CENPA-NAC complex. Plays an important role in chromosome congression and in the recruitment of CENP-O complex (which comprises CENPO, CENPP, CENPQ and CENPU), CENPE and PLK1 to the kinetochores. The sequence is that of Centromere protein Q (CENPQ) from Homo sapiens (Human).